The chain runs to 95 residues: ESAT-6-like protein EsxA (95 aa).

The protein belongs to the WXG100 family. ESAT-6 subfamily. Forms a tight 1:1 complex with EsxB. An artificial EsxA-EsxB heterodimer interacts with EspA.

Its subcellular location is the secreted. Its function is as follows. An exported protein. Unlike its M.tuberculosis counterpart has poor pore forming ability in artificial liposomes, does not undergo conformational change at acidic pH. Mutation of 2 residues to those found in M.tuberculosis (25-TA-26 to IH) alters the properties of this protein so that it inserts into liposomes at acidic pH, forming pores, like its M.tuberculosis counterpart. The sequence is that of ESAT-6-like protein EsxA from Mycolicibacterium smegmatis (strain ATCC 700084 / mc(2)155) (Mycobacterium smegmatis).